The chain runs to 425 residues: Interferon-activable protein 211 (425 aa).

Residues 1–88 (MVNEYKRIVL…AEILKKERSE (88 aa)) enclose the Pyrin domain. Positions 86-99 (RSEVTGETSLEKNG) are enriched in basic and acidic residues. Positions 86 to 223 (RSEVTGETSL…QNQNIPRGAV (138 aa)) are disordered. A compositionally biased stretch (low complexity) spans 122–153 (TSATQEETSTAQAGTSTAQAGTSTAQAGTSTA). Repeat copies occupy residues 129 to 135 (TSTAQAG), 136 to 142 (TSTAQAG), 143 to 149 (TSTAQAG), and 150 to 156 (TSTAQKR). Residues 129–177 (TSTAQAGTSTAQAGTSTAQAGTSTAQKRKSMREEETGVKKSKAAKEPDQ) are 4 X 7 AA tandem repeats of T-S-T-A-Q-A-[GR]. Basic and acidic residues predominate over residues 159-176 (MREEETGVKKSKAAKEPD). Residues 190 to 206 (SPILHSSSSASSNILSA) are compositionally biased toward low complexity. Positions 207–218 (KNQKSQPQNQNI) are enriched in polar residues. One can recognise an HIN-200 domain in the interval 213-413 (PQNQNIPRGA…CGDHSFVKVT (201 aa)).

Belongs to the HIN-200 family. As to quaternary structure, interacts with HOXB2. As to expression, mononuclear phagocytes.

Its subcellular location is the nucleus. Inhibits cell growth via p53/TP53 and RB1-dependent and independent pathways. May work in synergy with TP53 to promote the transcription of CDKN1A/P21. This chain is Interferon-activable protein 211, found in Mus musculus (Mouse).